The sequence spans 265 residues: 3-methyl-2-oxobutanoate hydroxymethyltransferase (265 aa).

Mg(2+) contacts are provided by aspartate 45 and aspartate 84. Residues 45–46 (DS), aspartate 84, and lysine 112 contribute to the 3-methyl-2-oxobutanoate site. Position 114 (glutamate 114) interacts with Mg(2+). The active-site Proton acceptor is the glutamate 182.

It belongs to the PanB family. As to quaternary structure, homodecamer; pentamer of dimers. It depends on Mg(2+) as a cofactor.

It localises to the cytoplasm. It carries out the reaction 3-methyl-2-oxobutanoate + (6R)-5,10-methylene-5,6,7,8-tetrahydrofolate + H2O = 2-dehydropantoate + (6S)-5,6,7,8-tetrahydrofolate. The protein operates within cofactor biosynthesis; (R)-pantothenate biosynthesis; (R)-pantoate from 3-methyl-2-oxobutanoate: step 1/2. Its function is as follows. Catalyzes the reversible reaction in which hydroxymethyl group from 5,10-methylenetetrahydrofolate is transferred onto alpha-ketoisovalerate to form ketopantoate. In Baumannia cicadellinicola subsp. Homalodisca coagulata, this protein is 3-methyl-2-oxobutanoate hydroxymethyltransferase.